Here is a 654-residue protein sequence, read N- to C-terminus: Fructose-1,6-bisphosphatase class 3 (654 aa).

Positions 288-307 are disordered; that stretch reads NPAFKPKKRPDKHERLTQRE. Over residues 298–307 the composition is skewed to basic and acidic residues; that stretch reads DKHERLTQRE.

Belongs to the FBPase class 3 family. It depends on Mn(2+) as a cofactor.

The enzyme catalyses beta-D-fructose 1,6-bisphosphate + H2O = beta-D-fructose 6-phosphate + phosphate. Its pathway is carbohydrate biosynthesis; gluconeogenesis. The sequence is that of Fructose-1,6-bisphosphatase class 3 from Staphylococcus aureus (strain USA300).